The primary structure comprises 525 residues: GMP synthase [glutamine-hydrolyzing] (525 aa).

The Glutamine amidotransferase type-1 domain occupies arginine 9–leucine 207. Cysteine 86 acts as the Nucleophile in catalysis. Residues histidine 181 and glutamate 183 contribute to the active site. The GMPS ATP-PPase domain occupies tryptophan 208 to arginine 400. Serine 235–serine 241 lines the ATP pocket.

Homodimer.

The catalysed reaction is XMP + L-glutamine + ATP + H2O = GMP + L-glutamate + AMP + diphosphate + 2 H(+). The protein operates within purine metabolism; GMP biosynthesis; GMP from XMP (L-Gln route): step 1/1. In terms of biological role, catalyzes the synthesis of GMP from XMP. In Pseudomonas syringae pv. syringae (strain B728a), this protein is GMP synthase [glutamine-hydrolyzing].